The chain runs to 525 residues: Protein kinase PINOID 2 (525 aa).

The disordered stretch occupies residues 1–27; that stretch reads MANSSIFYKDNESDYESSTVGPDSSRR. In terms of domain architecture, Protein kinase spans 87-465; that stretch reads FRLLKRLGSG…SIEIKRHEFF (379 aa). ATP is bound by residues 93-101 and Lys118; that span reads LGSGDIGSV. Asp214 serves as the catalytic Proton acceptor. An AGC-kinase C-terminal domain is found at 466–525; that stretch reads EGVNWALIRSIKPPWVPKEETSHKTKGDNRSVNYYLPPRFMMSRKERNEPYHVSNYFDYF.

It belongs to the protein kinase superfamily. Ser/Thr protein kinase family.

The enzyme catalyses L-seryl-[protein] + ATP = O-phospho-L-seryl-[protein] + ADP + H(+). The catalysed reaction is L-threonyl-[protein] + ATP = O-phospho-L-threonyl-[protein] + ADP + H(+). Functionally, serine/threonine-protein kinase involved in the regulation of auxin signaling. Plays a minor role in the regulation of cellular auxin efflux and cotyledon organogenesis. The chain is Protein kinase PINOID 2 (PID2) from Arabidopsis thaliana (Mouse-ear cress).